The following is a 795-amino-acid chain: Antibiotic resistant DNA gyrase subunit B (795 aa).

The 116-residue stretch at 421-536 (SELYLVEGNS…RGYIYIAQPP (116 aa)) folds into the Toprim domain. Mg(2+) contacts are provided by E427, D501, and D503.

The protein belongs to the type II topoisomerase GyrB family. In terms of assembly, heterotetramer, composed of two GyrA and two GyrB chains. In the heterotetramer, GyrA contains the active site tyrosine that forms a transient covalent intermediate with DNA, while GyrB binds cofactors and catalyzes ATP hydrolysis. It depends on Mg(2+) as a cofactor. Requires Mn(2+) as cofactor. Ca(2+) is required as a cofactor.

The protein localises to the cytoplasm. The catalysed reaction is ATP-dependent breakage, passage and rejoining of double-stranded DNA.. In terms of biological role, a type II topoisomerase that negatively supercoils closed circular double-stranded (ds) DNA in an ATP-dependent manner to modulate DNA topology and maintain chromosomes in an underwound state. Negative supercoiling favors strand separation, and DNA replication, transcription, recombination and repair, all of which involve strand separation. Also able to catalyze the interconversion of other topological isomers of dsDNA rings, including catenanes and knotted rings. Type II topoisomerases break and join 2 DNA strands simultaneously in an ATP-dependent manner. The chain is Antibiotic resistant DNA gyrase subunit B from Neisseria gonorrhoeae.